We begin with the raw amino-acid sequence, 451 residues long: Probable phosphoglucosamine mutase (451 aa).

Ser96 serves as the catalytic Phosphoserine intermediate. The Mg(2+) site is built by Ser96, Asp233, Asp235, and Asp237. At Ser96 the chain carries Phosphoserine.

The protein belongs to the phosphohexose mutase family. Mg(2+) is required as a cofactor. Post-translationally, activated by phosphorylation.

The enzyme catalyses alpha-D-glucosamine 1-phosphate = D-glucosamine 6-phosphate. Functionally, catalyzes the conversion of glucosamine-6-phosphate to glucosamine-1-phosphate. This Pyrococcus horikoshii (strain ATCC 700860 / DSM 12428 / JCM 9974 / NBRC 100139 / OT-3) protein is Probable phosphoglucosamine mutase.